Reading from the N-terminus, the 434-residue chain is Sodium/bile acid cotransporter 5 (434 aa).

An N-terminal signal peptide occupies residues 1 to 18; it reads MSGKLFIILLLLVTPGEA. Residues 19–129 lie on the Extracellular side of the membrane; that stretch reads RKSFLRFLNI…VSVFRQTEDS (111 aa). N-linked (GlcNAc...) asparagine glycans are attached at residues asparagine 73 and asparagine 96. Residues 130–150 form a helical membrane-spanning segment; that stretch reads LFQEPIHVNSSVFLLVLLMIL. Residues 151–172 are Cytoplasmic-facing; that stretch reads LNKCAFGCKIELQVLQTVWKRP. Residues 173-193 traverse the membrane as a helical segment; it reads LPILLGAVTQFFLMPFCGFLL. The Extracellular segment spans residues 194–195; sequence SQ. Residues 196–216 traverse the membrane as a helical segment; the sequence is ILGLSKAQAFGFVMTCTCPGG. Residues 217 to 232 are Cytoplasmic-facing; it reads GGGYLFALLLEGDVTL. A helical transmembrane segment spans residues 233-255; that stretch reads AILMACTSTSLALIMMPVNSYLY. Residues 256-268 lie on the Extracellular side of the membrane; sequence SCLLGLAGVFHVP. The chain crosses the membrane as a helical span at residues 269–289; that stretch reads VLKIVSTLLFILTPVSIGIVI. Residues 290–306 are Cytoplasmic-facing; sequence KHRMPKKAVCLERVVQP. The helical transmembrane segment at 307–327 threads the bilayer; sequence LSLTLMLVGVYLAFRMGLVFL. The Extracellular portion of the chain corresponds to 328–331; the sequence is RMAN. The chain crosses the membrane as a helical span at residues 332–352; it reads LEVFLLGLLVPVLGFSFGYSF. At 353 to 365 the chain is on the cytoplasmic side; the sequence is AKVYLLPLPVCKT. A helical membrane pass occupies residues 366 to 386; the sequence is VAIESGMLNSFLALAIIQLSF. Over 387 to 395 the chain is Extracellular; that stretch reads PQSKAYEAS. A helical transmembrane segment spans residues 396 to 416; sequence VAPFTVAMCSSCEMLLLLLVY. The Cytoplasmic segment spans residues 417–434; sequence KAKKRPLLSTENEKAPLV.

The protein belongs to the bile acid:sodium symporter (BASS) (TC 2.A.28) family.

The protein resides in the membrane. The polypeptide is Sodium/bile acid cotransporter 5 (Slc10a5) (Rattus norvegicus (Rat)).